A 100-amino-acid chain; its full sequence is Urease subunit gamma (100 aa).

This sequence belongs to the urease gamma subunit family. Heterotrimer of UreA (gamma), UreB (beta) and UreC (alpha) subunits. Three heterotrimers associate to form the active enzyme.

It is found in the cytoplasm. The enzyme catalyses urea + 2 H2O + H(+) = hydrogencarbonate + 2 NH4(+). The protein operates within nitrogen metabolism; urea degradation; CO(2) and NH(3) from urea (urease route): step 1/1. This Edwardsiella ictaluri (strain 93-146) protein is Urease subunit gamma.